An 88-amino-acid polypeptide reads, in one-letter code: Putative membrane protein insertion efficiency factor (88 aa).

The protein belongs to the UPF0161 family.

It localises to the cell inner membrane. Could be involved in insertion of integral membrane proteins into the membrane. In Synechococcus sp. (strain CC9311), this protein is Putative membrane protein insertion efficiency factor.